The chain runs to 79 residues: Acyl carrier protein (79 aa).

Positions 2–79 (ASKEEILAGL…QDAVDFIXGA (78 aa)) constitute a Carrier domain. An O-(pantetheine 4'-phosphoryl)serine modification is found at S40.

It belongs to the acyl carrier protein (ACP) family. In terms of processing, 4'-phosphopantetheine is transferred from CoA to a specific serine of apo-ACP by AcpS. This modification is essential for activity because fatty acids are bound in thioester linkage to the sulfhydryl of the prosthetic group.

It localises to the cytoplasm. It functions in the pathway lipid metabolism; fatty acid biosynthesis. Functionally, carrier of the growing fatty acid chain in fatty acid biosynthesis. The polypeptide is Acyl carrier protein (Myxococcus xanthus).